A 370-amino-acid polypeptide reads, in one-letter code: tRNA-specific 2-thiouridylase MnmA (370 aa).

Residues 11 to 18 and methionine 37 contribute to the ATP site; that span reads AMSGGVDS. Residues 99-101 are interaction with target base in tRNA; it reads NPD. Cysteine 104 acts as the Nucleophile in catalysis. Cysteine 104 and cysteine 201 are joined by a disulfide. ATP is bound at residue glycine 129. Residues 151–153 form an interaction with tRNA region; it reads KDQ. The active-site Cysteine persulfide intermediate is the cysteine 201. Positions 313 to 314 are interaction with tRNA; that stretch reads RY.

This sequence belongs to the MnmA/TRMU family. As to quaternary structure, interacts with TusE.

The protein resides in the cytoplasm. It catalyses the reaction S-sulfanyl-L-cysteinyl-[protein] + uridine(34) in tRNA + AH2 + ATP = 2-thiouridine(34) in tRNA + L-cysteinyl-[protein] + A + AMP + diphosphate + H(+). In terms of biological role, catalyzes the 2-thiolation of uridine at the wobble position (U34) of tRNA(Lys), tRNA(Glu) and tRNA(Gln), leading to the formation of s(2)U34, the first step of tRNA-mnm(5)s(2)U34 synthesis. Sulfur is provided by IscS, via a sulfur-relay system. Binds ATP and its substrate tRNAs. In Buchnera aphidicola subsp. Baizongia pistaciae (strain Bp), this protein is tRNA-specific 2-thiouridylase MnmA.